Consider the following 667-residue polypeptide: MGQTKSKTKSKYASYLSFIKILLKRGGVRVSTKNLIKLFQIIEQFCPWFPEQGTLDLKDWKRIGEELKQAGRKGNIIPLTVWNDWAIIKAALEPFQTKEDSVSVSDAPGSCVIDCNEKTGRKSQKETESLHCEYVTEPVMAQSTQNVDYNQLQGVIYPETLKLEGKGPELVGPSESKPRGPSPLPAGQVPVTLQPQTQVKENKTQPPVAYQYWPPAELQYLPPPESQYGYPGMPPALQGRAPYPQPPTVRLNPTASRSGQGGTLHAVIDEARKQGDLEAWRFLVILQLVQAGEETQVGAPARAETRCEPFTMKMLKDIKEGVKQYGSNSPYIRTLLDSIAHGNRLTPYDWESLAKSSLSSSQYLQFKTWWIDGVQEQVRKNQATKPTVNIDADQLLGTGPNWSTINQQSVMQNEAIEQVRAICLRAWGKIQDPGTAFPINSIRQGSKEPYPDFVARLQDAAQKSITDDNARKVIVELMAYENANPECQSAIKPLKGKVPAGVDVITEYVKACDGIGGAMHKAMLMAQAMRGLTLGGQVRTFGKKCYNCGQIGHLKRSCPVLNKQNIINQAITAKNKKPSGLCPKCGKGKHWANQCHSKFDKDGQPLSGNRKRGQPQAPQQTGAFPVQLFVPQGFQGQQPLQKIPPLQGVSQLQQSNSCPAPQQAAPQ.

Glycine 2 carries the N-myristoyl glycine lipid modification. The segment at 166–188 (KGPELVGPSESKPRGPSPLPAGQ) is disordered. 2 CCHC-type zinc fingers span residues 543 to 560 (KKCY…SCPV) and 580 to 597 (GLCP…QCHS). Residues 598-667 (KFDKDGQPLS…CPAPQQAAPQ (70 aa)) are disordered. Over residues 648–667 (GVSQLQQSNSCPAPQQAAPQ) the composition is skewed to polar residues.

This sequence belongs to the beta type-B retroviral Gag protein family. HERV class-II K(HML-2) gag subfamily. Myristoylation is essential for retroviral assembly. Alteration of the glycine residue leads to a block in the budding of particles and an accumulation of Gag inside the cell. Post-translationally, specific enzymatic cleavages may yield mature proteins.

It localises to the cell membrane. Its function is as follows. The products of the Gag polyproteins of infectious retroviruses perform highly complex orchestrated tasks during the assembly, budding, maturation, and infection stages of the viral replication cycle. During viral assembly, the proteins form membrane associations and self-associations that ultimately result in budding of an immature virion from the infected cell. Gag precursors also function during viral assembly to selectively bind and package two plus strands of genomic RNA. Endogenous Gag proteins may have kept, lost or modified their original function during evolution. The chain is Endogenous retrovirus group K member 5 Gag polyprotein (ERVK-5) from Homo sapiens (Human).